A 106-amino-acid chain; its full sequence is Programmed cell death activator egl-1 (106 aa).

A BH3-like region spans residues 73 to 81 (LAAMCDDFD).

As to quaternary structure, interacts with ced-9; the interaction results in ced-4 release from the ced-4/ced-9 complex. Interaction with ced-9 may enhance interaction of ced-9 with drp-1, but not with ced-4. A ced-9/egl-1 complex may recruit drp-1 to the mitochondrial surface.

Its subcellular location is the synapse. In terms of biological role, plays a major role in programmed cell death (PCD or apoptosis) by negatively regulating ced-9. Binds to and directly inhibits the activity of ced-9, releasing the cell death activator ced-4 from a ced-9/ced-4 containing protein complex and allowing ced-4 to activate the cell-killing caspase ced-3. Required to activate programmed cell death in the sister cells of the serotonergic neurosecretory motor (NSM) neurons during embryogenesis. Required to activate programmed cell death in the sister cells of the M4 motor neuron and I1 pharyngeal neuron during embryogenesis. During larval development, required for the elimination of transient presynaptic components upstream of ced-9, ced-4 and ced-3 apoptotic pathway. Together with ain-1, a component of the miRNA-induced-silencing complex (miRISC), and probably upstream of ced-3 and ced-4, regulates temporal cell fate patterning during larval development. Has been shown in two studies to be dispensable in mitochondrial dynamics and morphology during early embryonic development. However, one study shows that during larval development, egl-1 is involved in modulating mitochondrial dynamics, perhaps acting by stabilizing the interaction between ced-9 and drp-1 in order to promote mitochondrial fission. Involved in inducing mitochondrial fragmentation during apoptosis, probably acting via ced-9 and dynamin-related protein drp-1. This Caenorhabditis elegans protein is Programmed cell death activator egl-1.